A 98-amino-acid chain; its full sequence is Acylphosphatase (98 aa).

In terms of domain architecture, Acylphosphatase-like spans Thr-12–Gln-98. Residues Arg-27 and Asn-45 contribute to the active site.

It belongs to the acylphosphatase family.

The catalysed reaction is an acyl phosphate + H2O = a carboxylate + phosphate + H(+). This is Acylphosphatase (acyP) from Burkholderia ambifaria (strain ATCC BAA-244 / DSM 16087 / CCUG 44356 / LMG 19182 / AMMD) (Burkholderia cepacia (strain AMMD)).